A 439-amino-acid chain; its full sequence is Glutamate-1-semialdehyde 2,1-aminomutase (439 aa).

At Lys279 the chain carries N6-(pyridoxal phosphate)lysine.

Belongs to the class-III pyridoxal-phosphate-dependent aminotransferase family. HemL subfamily. Homodimer. Pyridoxal 5'-phosphate serves as cofactor.

It localises to the cytoplasm. The catalysed reaction is (S)-4-amino-5-oxopentanoate = 5-aminolevulinate. The protein operates within porphyrin-containing compound metabolism; protoporphyrin-IX biosynthesis; 5-aminolevulinate from L-glutamyl-tRNA(Glu): step 2/2. This Rhodopirellula baltica (strain DSM 10527 / NCIMB 13988 / SH1) protein is Glutamate-1-semialdehyde 2,1-aminomutase.